Reading from the N-terminus, the 367-residue chain is Undecaprenyl-phosphate alpha-N-acetylglucosaminyl 1-phosphate transferase (367 aa).

A run of 10 helical transmembrane segments spans residues 3–23 (LLTV…FLFF), 46–66 (LIPL…FGIV), 69–89 (YIPH…IGAL), 132–152 (VLGP…INAF), 158–178 (IDGL…MILW), 187–207 (IWCF…LGIL), 213–233 (VFMG…ILLE), 242–262 (ISPV…VAIM), 294–314 (AFVL…LAEY), and 318–338 (VPEW…GYCI).

It belongs to the glycosyltransferase 4 family. WecA subfamily. The cofactor is Mg(2+). Mn(2+) serves as cofactor.

The protein resides in the cell inner membrane. The catalysed reaction is di-trans,octa-cis-undecaprenyl phosphate + UDP-N-acetyl-alpha-D-glucosamine = N-acetyl-alpha-D-glucosaminyl-di-trans,octa-cis-undecaprenyl diphosphate + UMP. The protein operates within bacterial outer membrane biogenesis; LPS O-antigen biosynthesis. It functions in the pathway bacterial outer membrane biogenesis; enterobacterial common antigen biosynthesis. In terms of biological role, catalyzes the transfer of the GlcNAc-1-phosphate moiety from UDP-GlcNAc onto the carrier lipid undecaprenyl phosphate (C55-P), yielding GlcNAc-pyrophosphoryl-undecaprenyl (GlcNAc-PP-C55). The polypeptide is Undecaprenyl-phosphate alpha-N-acetylglucosaminyl 1-phosphate transferase (Escherichia coli O157:H7).